A 130-amino-acid chain; its full sequence is Small ribosomal subunit protein uS11c (130 aa).

Belongs to the universal ribosomal protein uS11 family. In terms of assembly, part of the 30S ribosomal subunit.

The protein localises to the plastid. Its subcellular location is the chloroplast. In Guillardia theta (Cryptophyte), this protein is Small ribosomal subunit protein uS11c.